Consider the following 160-residue polypeptide: Large ribosomal subunit protein bL9 (160 aa).

Belongs to the bacterial ribosomal protein bL9 family.

In terms of biological role, binds to the 23S rRNA. The chain is Large ribosomal subunit protein bL9 from Neorickettsia sennetsu (strain ATCC VR-367 / Miyayama) (Ehrlichia sennetsu).